The primary structure comprises 244 residues: Pyridoxine 5'-phosphate synthase (244 aa).

Asn9 provides a ligand contact to 3-amino-2-oxopropyl phosphate. 11 to 12 (DH) contacts 1-deoxy-D-xylulose 5-phosphate. Arg20 is a binding site for 3-amino-2-oxopropyl phosphate. The Proton acceptor role is filled by His45. Arg47 and His52 together coordinate 1-deoxy-D-xylulose 5-phosphate. Glu72 functions as the Proton acceptor in the catalytic mechanism. Thr102 lines the 1-deoxy-D-xylulose 5-phosphate pocket. His193 acts as the Proton donor in catalysis. Residues Gly194 and 215–216 (GH) contribute to the 3-amino-2-oxopropyl phosphate site.

It belongs to the PNP synthase family. In terms of assembly, homooctamer; tetramer of dimers.

It is found in the cytoplasm. It catalyses the reaction 3-amino-2-oxopropyl phosphate + 1-deoxy-D-xylulose 5-phosphate = pyridoxine 5'-phosphate + phosphate + 2 H2O + H(+). It participates in cofactor biosynthesis; pyridoxine 5'-phosphate biosynthesis; pyridoxine 5'-phosphate from D-erythrose 4-phosphate: step 5/5. Functionally, catalyzes the complicated ring closure reaction between the two acyclic compounds 1-deoxy-D-xylulose-5-phosphate (DXP) and 3-amino-2-oxopropyl phosphate (1-amino-acetone-3-phosphate or AAP) to form pyridoxine 5'-phosphate (PNP) and inorganic phosphate. This chain is Pyridoxine 5'-phosphate synthase, found in Blochmanniella pennsylvanica (strain BPEN).